The sequence spans 208 residues: Na(+)-translocating NADH-quinone reductase subunit D (208 aa).

The next 5 membrane-spanning stretches (helical) occupy residues 42–62 (IVMG…ISLV), 72–92 (IIVQ…LLQA), 103–123 (VFVG…AFAM), 131–151 (LIDG…VATV), and 178–198 (NGLF…IWGL).

It belongs to the NqrDE/RnfAE family. In terms of assembly, composed of six subunits; NqrA, NqrB, NqrC, NqrD, NqrE and NqrF.

The protein localises to the cell inner membrane. The catalysed reaction is a ubiquinone + n Na(+)(in) + NADH + H(+) = a ubiquinol + n Na(+)(out) + NAD(+). Its function is as follows. NQR complex catalyzes the reduction of ubiquinone-1 to ubiquinol by two successive reactions, coupled with the transport of Na(+) ions from the cytoplasm to the periplasm. NqrA to NqrE are probably involved in the second step, the conversion of ubisemiquinone to ubiquinol. In Neisseria gonorrhoeae (strain ATCC 700825 / FA 1090), this protein is Na(+)-translocating NADH-quinone reductase subunit D.